We begin with the raw amino-acid sequence, 377 residues long: Opsin-5 (377 aa).

Residues 1 to 33 are Extracellular-facing; it reads MALNHTALPQDERLPHYLRDEDPFASKLSWEAD. Residue Asn4 is glycosylated (N-linked (GlcNAc...) asparagine). The helical transmembrane segment at 34–54 threads the bilayer; the sequence is LVAGFYLTIIGILSTFGNGYV. Residues 55–74 are Cytoplasmic-facing; it reads LYMSSRRKKKLRPAEIMTIN. The chain crosses the membrane as a helical span at residues 75-95; it reads LAVCDLGISVVGKPFTIISCF. Topologically, residues 96 to 108 are extracellular; it reads CHRWVFGWFGCRW. An intrachain disulfide couples Cys106 to Cys183. The chain crosses the membrane as a helical span at residues 109 to 129; the sequence is YGWAGFFFGCGSLITMTAVSL. At 130-150 the chain is on the cytoplasmic side; that stretch reads DRYLKICYLSYGVWLKRKHAY. Residues 151–171 traverse the membrane as a helical segment; it reads ICLAVIWAYASFWTTMPLVGL. Residues 172–197 are Extracellular-facing; it reads GDYAPEPFGTSCTLDWWLAQASGGGQ. The helical transmembrane segment at 198–218 threads the bilayer; it reads VFILSILFFCLLLPTAVIVFS. The Cytoplasmic segment spans residues 219–252; sequence YAKIIAKVKSSSKEVAHFDSRIHSSHVLEVKLTK. The chain crosses the membrane as a helical span at residues 253 to 273; the sequence is VAMLICAGFLIAWIPYAVVSV. At 274 to 288 the chain is on the extracellular side; sequence WSAFGRPDSIPIQLS. Residues 289–309 form a helical membrane-spanning segment; it reads VVPTLLAKSAAMYNPIIYQVI. Position 296 is an N6-(retinylidene)lysine (Lys296). The Cytoplasmic segment spans residues 310-377; sequence DYRFACCQAG…HSNDGDCGKK (68 aa). S-palmitoyl cysteine attachment occurs at residues Cys315 and Cys316. The disordered stretch occupies residues 357-377; that stretch reads FTSAHVMDGESHSNDGDCGKK. The span at 363-377 shows a compositional bias: basic and acidic residues; sequence MDGESHSNDGDCGKK.

The protein belongs to the G-protein coupled receptor 1 family. Opsin subfamily. It is uncertain whether Cys-315 or Cys-316 is palmitoylated. Expressed in the brain (at protein level). Weakly expressed in the skin and liver (at protein level). Abundantly expressed in striated muscle cells. Expressed in Math7/Atok7-dependent retinal ganglion cells in the ganglion cell layer (at protein level). Additionally expressed in horizontal and amacrine cells in the inner nuclear layer of the retina (at protein level). Expressed around the base of hair follicles and in epidermal and sebaceous gland cells of the outer ear (at protein level). Abundantly expressed in vibrissae hair follicles and weakly expressed in the vibrissae skin pad, dorsal back skin, and tail.

The protein resides in the cell membrane. In terms of biological role, G-protein coupled receptor which selectively activates G(i) type G proteins via ultraviolet A (UVA) light-mediated activation in the retina. Preferentially binds the chromophore 11-cis retinal and is a bistable protein that displays emission peaks at 380 nm (UVA light) and 470 nm (blue light). Required for the light-response in the inner plexiform layer, and contributes to the regulation of the light-response in the nerve fiber layer, via phosphorylated DAT/SLC6A3 dopamine uptake. Involved in local corneal and retinal circadian rhythm photoentrainment via modulation of the UVA light-induced phase-shift of the retina clock. Acts as a circadian photoreceptor in the outer ear and vibrissal pads, via modulation of circadian clock-gene expression in response to violet light during the light-to-dark transition phase and night phase of the circadian cycle. Required in the retina to negatively regulate hyaloid vessel regression during postnatal development via light-dependent OPN5-SLC32A1-DRD2-VEGFR2 signaling. Involved in the light-dependent regulation of retina and vitreous compartment dopamine levels. This chain is Opsin-5 (Opn5), found in Mus musculus (Mouse).